The sequence spans 112 residues: Ferredoxin, plant-type (112 aa).

The 2Fe-2S ferredoxin-type domain occupies 6 to 97 (YEVFEVLSGQ…DLTIEYFRHV (92 aa)). [2Fe-2S] cluster-binding residues include cysteine 41, cysteine 46, cysteine 49, and cysteine 81.

Belongs to the 2Fe2S plant-type ferredoxin family.

The protein operates within aromatic compound metabolism; catechol degradation. In terms of biological role, ferredoxins are iron-sulfur proteins that transfer electrons in a wide variety of metabolic reactions. The chain is Ferredoxin, plant-type (xylT) from Pseudomonas putida (Arthrobacter siderocapsulatus).